Here is a 157-residue protein sequence, read N- to C-terminus: Phosphomannomutase (157 aa).

S98 (phosphoserine intermediate) is an active-site residue. A Mg(2+)-binding site is contributed by S98.

It belongs to the phosphohexose mutase family. Mg(2+) serves as cofactor.

The enzyme catalyses alpha-D-mannose 1-phosphate = D-mannose 6-phosphate. Its pathway is nucleotide-sugar biosynthesis; GDP-alpha-D-mannose biosynthesis; alpha-D-mannose 1-phosphate from D-fructose 6-phosphate: step 2/2. It participates in capsule biogenesis; capsule polysaccharide biosynthesis. Functionally, involved in the biosynthesis of the K2 capsular polysaccharide biosynthesis. This is Phosphomannomutase (manB) from Klebsiella pneumoniae.